The primary structure comprises 273 residues: NAD-dependent protein deacylase (273 aa).

The 253-residue stretch at 20–272 (RERLRQRIFF…PEFVDKFLKG (253 aa)) folds into the Deacetylase sirtuin-type domain. NAD(+) is bound at residue 48 to 67 (GAGISAESGIRTFRAADGLW). Substrate is bound by residues Tyr-92 and Arg-95. 129 to 132 (QNID) contacts NAD(+). His-147 functions as the Proton acceptor in the catalytic mechanism. Zn(2+) is bound by residues Cys-155 and Cys-174. NAD(+)-binding positions include 214–216 (GTS), 240–242 (NLE), and Ala-258.

This sequence belongs to the sirtuin family. Class III subfamily. The cofactor is Zn(2+).

The protein resides in the cytoplasm. The enzyme catalyses N(6)-acetyl-L-lysyl-[protein] + NAD(+) + H2O = 2''-O-acetyl-ADP-D-ribose + nicotinamide + L-lysyl-[protein]. It catalyses the reaction N(6)-succinyl-L-lysyl-[protein] + NAD(+) + H2O = 2''-O-succinyl-ADP-D-ribose + nicotinamide + L-lysyl-[protein]. The catalysed reaction is N(6)-(2-hydroxyisobutanoyl)-L-lysyl-[protein] + NAD(+) + H2O = 2''-O-(2-hydroxyisobutanoyl)-ADP-D-ribose + nicotinamide + L-lysyl-[protein]. Its function is as follows. NAD-dependent lysine deacetylase that specifically removes acetyl groups on target proteins. Also acts as a protein-lysine deacylase by mediating protein desuccinylation and de-2-hydroxyisobutyrylation. Modulates the activities of several proteins which are inactive in their acylated form. This Salmonella typhi protein is NAD-dependent protein deacylase.